The primary structure comprises 255 residues: Triosephosphate isomerase (255 aa).

9–11 (NWK) serves as a coordination point for substrate. The active-site Electrophile is H96. E170 acts as the Proton acceptor in catalysis. Residues G176, S216, and 237 to 238 (GG) contribute to the substrate site.

The protein belongs to the triosephosphate isomerase family. As to quaternary structure, homodimer.

The protein resides in the cytoplasm. It carries out the reaction D-glyceraldehyde 3-phosphate = dihydroxyacetone phosphate. Its pathway is carbohydrate biosynthesis; gluconeogenesis. It participates in carbohydrate degradation; glycolysis; D-glyceraldehyde 3-phosphate from glycerone phosphate: step 1/1. Functionally, involved in the gluconeogenesis. Catalyzes stereospecifically the conversion of dihydroxyacetone phosphate (DHAP) to D-glyceraldehyde-3-phosphate (G3P). The chain is Triosephosphate isomerase from Magnetococcus marinus (strain ATCC BAA-1437 / JCM 17883 / MC-1).